The following is a 535-amino-acid chain: Putative beta-glucosidase 41 (535 aa).

Positions 1–27 are cleaved as a signal peptide; it reads MESLMRLVLVLFPFFVVFFVPLDHVSS. Residue glutamine 49 participates in a beta-D-glucoside binding. The N-linked (GlcNAc...) asparagine glycan is linked to asparagine 118. A beta-D-glucoside contacts are provided by residues histidine 151 and 196–197; that span reads NE. Glutamate 197 functions as the Proton donor in the catalytic mechanism. A disulfide bridge connects residues cysteine 216 and cysteine 224. A beta-D-glucoside is bound by residues tyrosine 340 and glutamate 413. Glutamate 413 acts as the Nucleophile in catalysis. An N-linked (GlcNAc...) asparagine glycan is attached at asparagine 445. A beta-D-glucoside contacts are provided by residues tryptophan 463, 470-471, and phenylalanine 479; that span reads EW. The N-linked (GlcNAc...) asparagine glycan is linked to asparagine 489.

The protein belongs to the glycosyl hydrolase 1 family.

The catalysed reaction is Hydrolysis of terminal, non-reducing beta-D-glucosyl residues with release of beta-D-glucose.. The sequence is that of Putative beta-glucosidase 41 from Arabidopsis thaliana (Mouse-ear cress).